We begin with the raw amino-acid sequence, 309 residues long: MSSFANRDVISVRDFTRKELEELLSHAEEMERVYERGGDDRLSGKILATLFFSPSTRTRLSFESAMHRLGGDVISLGGKEAASTAKGENLADTVRTVEHYCDVIVLRHPKEGAARLAAELTDVPVINAGDGANQHPTQTFLDLYTIMKEKGRIGGLRIGLLGDLKYGRTVHSLAYALALFGAKIHLISPEELRMPSHILEELEQIGAEVEEHRDLEEILPDLDVLYVTRIQREMFPDPEEFERVKGSYKVTRELIEEHARSDLVILHPLPRVDEIEPDVDELPQARYFDQVRNGVIVRMALLDLILGGG.

2 residues coordinate carbamoyl phosphate: Arg57 and Thr58. Lys86 contacts L-aspartate. Positions 107, 135, and 138 each coordinate carbamoyl phosphate. L-aspartate contacts are provided by Arg168 and Arg229. Carbamoyl phosphate contacts are provided by Leu269 and Pro270.

The protein belongs to the aspartate/ornithine carbamoyltransferase superfamily. ATCase family. In terms of assembly, heterooligomer of catalytic and regulatory chains.

The catalysed reaction is carbamoyl phosphate + L-aspartate = N-carbamoyl-L-aspartate + phosphate + H(+). The protein operates within pyrimidine metabolism; UMP biosynthesis via de novo pathway; (S)-dihydroorotate from bicarbonate: step 2/3. Its function is as follows. Catalyzes the condensation of carbamoyl phosphate and aspartate to form carbamoyl aspartate and inorganic phosphate, the committed step in the de novo pyrimidine nucleotide biosynthesis pathway. This Methanopyrus kandleri (strain AV19 / DSM 6324 / JCM 9639 / NBRC 100938) protein is Aspartate carbamoyltransferase catalytic subunit.